Here is a 764-residue protein sequence, read N- to C-terminus: MRPPPLLHLALLLALPRSLGGKGCPSPPCECHQEDDFRVTCKDIHRIPTLPPSTQTLKFIETQLKTIPSRAFSNLPNISRIYLSIDATLQRLESHSFYNLSKMTHIEIRNTRSLTSIDPDALKELPLLKFLGIFNTGLGVFPDVTKVYSTDVFFILEITDNPYMASIPANAFQGLCNETLTLKLYNNGFTSIQGHAFNGTKLDAVYLNKNKYLSAIDKDAFGGVYSGPTLLDVSYTSVTALPSKGLEHLKELIARNTWTLKKLPLSLSFLHLTRADLSYPSHCCAFKNQKKIRGILESLMCNESSIRSLRQRKSVNTLNGPFDQEYEEYLGDSHAGYKDNSQFQDTDSNSHYYVFFEEQEDEILGFGQELKNPQEETLQAFDSHYDYTVCGGNEDMVCTPKSDEFNPCEDIMGYKFLRIVVWFVSLLALLGNVFVLIVLLTSHYKLTVPRFLMCNLAFADFCMGMYLLLIASVDLYTHSEYYNHAIDWQTGPGCNTAGFFTVFASELSVYTLTVITLERWYAITFAMRLDRKIRLRHAYAIMVGGWVCCFLLALLPLVGISSYAKVSICLPMDTETPLALAYIILVLLLNIVAFIIVCSCYVKIYITVRNPQYNPGDKDTKIAKRMAVLIFTDFMCMAPISFYALSALMNKPLITVTNSKILLVLFYPLNSCANPFLYAIFTKAFQRDVFILLSKFGICKRQAQAYRGQRVSPKNSAGIQIQKVTRDMRQSLPNMQDEYELLENSHLTPNKQGQISKEYNQTVL.

The N-terminal stretch at 1–20 (MRPPPLLHLALLLALPRSLG) is a signal peptide. Residues 21-413 (GKGCPSPPCE…EFNPCEDIMG (393 aa)) are Extracellular-facing. Cysteines 31 and 41 form a disulfide. N-linked (GlcNAc...) asparagine glycosylation is found at Asn77 and Asn99. 6 LRR repeats span residues 125–149 (LPLL…KVYS), 150–174 (TDVF…AFQG), 176–199 (CNET…AFNG), 201–223 (KLDA…AFGG), 225–248 (YSGP…GLEH), and 250–271 (KELI…SFLH). Residues Asn177 and Asn198 are each glycosylated (N-linked (GlcNAc...) asparagine). An N-linked (GlcNAc...) asparagine glycan is attached at Asn302. Tyr385 bears the Sulfotyrosine mark. A helical transmembrane segment spans residues 414 to 441 (YKFLRIVVWFVSLLALLGNVFVLIVLLT). Residues 442-450 (SHYKLTVPR) are Cytoplasmic-facing. A helical membrane pass occupies residues 451–473 (FLMCNLAFADFCMGMYLLLIASV). The Extracellular segment spans residues 474–494 (DLYTHSEYYNHAIDWQTGPGC). Cys494 and Cys569 are oxidised to a cystine. A helical transmembrane segment spans residues 495–517 (NTAGFFTVFASELSVYTLTVITL). Topologically, residues 518-537 (ERWYAITFAMRLDRKIRLRH) are cytoplasmic. A helical transmembrane segment spans residues 538-560 (AYAIMVGGWVCCFLLALLPLVGI). The Extracellular segment spans residues 561–580 (SSYAKVSICLPMDTETPLAL). The helical transmembrane segment at 581-602 (AYIILVLLLNIVAFIIVCSCYV) threads the bilayer. The Cytoplasmic portion of the chain corresponds to 603 to 625 (KIYITVRNPQYNPGDKDTKIAKR). A helical membrane pass occupies residues 626 to 649 (MAVLIFTDFMCMAPISFYALSALM). Over 650-660 (NKPLITVTNSK) the chain is Extracellular. Residues 661 to 682 (ILLVLFYPLNSCANPFLYAIFT) traverse the membrane as a helical segment. Residues 683-764 (KAFQRDVFIL…ISKEYNQTVL (82 aa)) are Cytoplasmic-facing. Positions 762-764 (TVL) match the PDZ-binding motif.

This sequence belongs to the G-protein coupled receptor 1 family. FSH/LSH/TSH subfamily. As to quaternary structure, interacts with heterodimer GPHA2:GPHB5; this interaction stimulates cAMP production. Interacts (via the PDZ-binding motif) with SCRIB; regulates TSHR trafficking and function. Post-translationally, glycosylated. In terms of processing, sulfated. Sulfation on Tyr-385 plays a role in thyrotropin receptor binding and activation.

It is found in the cell membrane. The protein localises to the basolateral cell membrane. Receptor for the thyroid-stimulating hormone (TSH) or thyrotropin. Also acts as a receptor for the heterodimeric glycoprotein hormone (GPHA2:GPHB5) or thyrostimulin. The activity of this receptor is mediated by G proteins which activate adenylate cyclase. Plays a central role in controlling thyroid cell metabolism. This is Thyrotropin receptor (TSHR) from Canis lupus familiaris (Dog).